The primary structure comprises 274 residues: Large ribosomal subunit protein uL2 (274 aa).

The disordered stretch occupies residues 222–274 (GVAMNPVDHPHGGGEGRGKGHHPQSPWGQLAKGYKTRRGKKASDKLIVRRRNG). Residues 229–239 (DHPHGGGEGRG) show a composition bias toward basic and acidic residues.

Belongs to the universal ribosomal protein uL2 family. Part of the 50S ribosomal subunit. Forms a bridge to the 30S subunit in the 70S ribosome.

One of the primary rRNA binding proteins. Required for association of the 30S and 50S subunits to form the 70S ribosome, for tRNA binding and peptide bond formation. It has been suggested to have peptidyltransferase activity; this is somewhat controversial. Makes several contacts with the 16S rRNA in the 70S ribosome. The chain is Large ribosomal subunit protein uL2 from Thermosipho melanesiensis (strain DSM 12029 / CIP 104789 / BI429).